A 362-amino-acid polypeptide reads, in one-letter code: Heat-inducible transcription repressor HrcA (362 aa).

This sequence belongs to the HrcA family.

In terms of biological role, negative regulator of class I heat shock genes (grpE-dnaK-dnaJ and groELS operons). Prevents heat-shock induction of these operons. The protein is Heat-inducible transcription repressor HrcA of Rhodopseudomonas palustris (strain BisB18).